An 823-amino-acid polypeptide reads, in one-letter code: Valine--tRNA ligase (823 aa).

Lys-547 is an ATP binding site.

It belongs to the class-I aminoacyl-tRNA synthetase family. ValS type 2 subfamily.

It is found in the cytoplasm. It catalyses the reaction tRNA(Val) + L-valine + ATP = L-valyl-tRNA(Val) + AMP + diphosphate. Its function is as follows. Catalyzes the attachment of valine to tRNA(Val). As ValRS can inadvertently accommodate and process structurally similar amino acids such as threonine, to avoid such errors, it has a 'posttransfer' editing activity that hydrolyzes mischarged Thr-tRNA(Val) in a tRNA-dependent manner. The chain is Valine--tRNA ligase (valS) from Aeropyrum pernix (strain ATCC 700893 / DSM 11879 / JCM 9820 / NBRC 100138 / K1).